The following is a 158-amino-acid chain: Inorganic pyrophosphatase (158 aa).

Glutamate 8 serves as a coordination point for Mg(2+). Residues lysine 16, arginine 30, and tyrosine 42 each contribute to the substrate site. Residues aspartate 52, aspartate 57, aspartate 84, and aspartate 89 each coordinate Mg(2+). The Proton acceptor role is filled by aspartate 89. Substrate is bound at residue tyrosine 125.

Belongs to the PPase family. In terms of assembly, homohexamer. The cofactor is Mg(2+).

Its subcellular location is the cytoplasm. It carries out the reaction diphosphate + H2O = 2 phosphate + H(+). Functionally, catalyzes the hydrolysis of inorganic pyrophosphate (PPi) forming two phosphate ions. In Corynebacterium efficiens (strain DSM 44549 / YS-314 / AJ 12310 / JCM 11189 / NBRC 100395), this protein is Inorganic pyrophosphatase.